We begin with the raw amino-acid sequence, 49 residues long: uncharacterized protein (49 aa).

A helical transmembrane segment spans residues 16–36 (WTCHTGFYLMILLVLFFMYGF).

It localises to the cell membrane. This is an uncharacterized protein from Bacillus subtilis (strain 168).